The chain runs to 279 residues: Phospholipase A and acyltransferase 5 (279 aa).

2 disordered regions span residues 1-53 (MGLS…GLNS) and 70-117 (QLPA…ENEG). Positions 97–106 (LETTPSQKAD) are enriched in polar residues. Residues 135 to 249 (LIEIFRIGYE…LRYGVPRSQQ (115 aa)) form the LRAT domain. Catalysis depends on residues H145 and H157. Catalysis depends on C233, which acts as the Acyl-thioester intermediate.

It belongs to the H-rev107 family. As to expression, highest expression level in testis and pancreas.

It localises to the cytoplasm. The protein localises to the cytosol. It catalyses the reaction a 1,2-diacyl-sn-glycero-3-phosphocholine + H2O = a 1-acyl-sn-glycero-3-phosphocholine + a fatty acid + H(+). The catalysed reaction is a 1,2-diacyl-sn-glycero-3-phosphocholine + H2O = a 2-acyl-sn-glycero-3-phosphocholine + a fatty acid + H(+). The enzyme catalyses 1-hexadecanoyl-2-(5Z,8Z,11Z,14Z-eicosatetraenoyl)-sn-glycero-3-phosphocholine + 1,2-di-(9Z-octadecenoyl)-sn-glycero-3-phosphoethanolamine = N-(5Z,8Z,11Z,14Z-eicosatetraenoyl)-1,2-di-(9Z-octadecenoyl)-sn-glycero-3-phosphoethanolamine + 1-hexadecanoyl-sn-glycero-3-phosphocholine + H(+). It carries out the reaction 1,2-di-(9Z-octadecenoyl)-sn-glycero-3-phosphoethanolamine + 1,2-dihexadecanoyl-sn-glycero-3-phosphocholine = N-hexadecanoyl-1,2-di-(9Z-octadecenoyl)-sn-glycero-3-phosphoethanolamine + 1-hexadecanoyl-sn-glycero-3-phosphocholine + H(+). It catalyses the reaction 1,2-di-(9Z-octadecenoyl)-sn-glycero-3-phosphoethanolamine + 1,2-dihexadecanoyl-sn-glycero-3-phosphocholine = N-hexadecanoyl-1,2-di-(9Z-octadecenoyl)-sn-glycero-3-phosphoethanolamine + 2-hexadecanoyl-sn-glycero-3-phosphocholine + H(+). The catalysed reaction is a 1,2-diacyl-sn-glycero-3-phosphoethanolamine + a 1,2-diacyl-sn-glycero-3-phosphocholine = an N-acyl-1,2-diacyl-sn-glycero-3-phosphoethanolamine + a 1-acyl-sn-glycero-3-phosphocholine + H(+). The enzyme catalyses a 1,2-diacyl-sn-glycero-3-phosphoethanolamine + a 1,2-diacyl-sn-glycero-3-phosphocholine = an N-acyl-1,2-diacyl-sn-glycero-3-phosphoethanolamine + a 2-acyl-sn-glycero-3-phosphocholine + H(+). It carries out the reaction 1-hexadecanoyl-2-(9Z-octadecenoyl)-sn-glycero-3-phosphocholine + 1,2-di-(9Z-octadecenoyl)-sn-glycero-3-phosphoethanolamine = N,1,2-tri-(9Z-octadecenoyl)-sn-glycero-3-phosphoethanolamine + 1-hexadecanoyl-sn-glycero-3-phosphocholine + H(+). Exhibits both phospholipase A1/2 and acyltransferase activities. Shows phospholipase A1 (PLA1) and A2 (PLA2) activity, catalyzing the calcium-independent release of fatty acids from the sn-1 or sn-2 position of glycerophospholipids. Shows N-acyltransferase activity, catalyzing the calcium-independent transfer of a fatty acyl group at the sn-1 position of phosphatidylcholine (PC) and other glycerophospholipids to the primary amine of phosphatidylethanolamine (PE), forming N-acylphosphatidylethanolamine (NAPE), which serves as precursor for N-acylethanolamines (NAEs). The protein is Phospholipase A and acyltransferase 5 of Homo sapiens (Human).